The following is a 236-amino-acid chain: Methylosome subunit pICln (236 aa).

The interval 1 to 20 (MSFLKSFPPPGPTEGLRHQQ) is disordered. Ser2 carries the post-translational modification N-acetylserine. Phosphoserine is present on residues Ser101, Ser143, Ser192, Ser194, Ser197, and Ser209. Phosphothreonine is present on Thr222.

It belongs to the pICln (TC 1.A.47) family. Component of the methylosome, a 20S complex containing at least PRMT5/SKB1, WDR77/MEP50 and CLNS1A/pICln. May mediate SNRPD1 and SNRPD3 methylation. Forms a 6S pICln-Sm complex composed of CLNS1A/pICln, SNRPD1, SNRPD2, SNRPE, SNRPF and SNRPG; ring-like structure where CLNS1A/pICln mimics additional Sm proteins and which is unable to assemble into the core snRNP. Interacts with LSM10 and LSM11. As to expression, widely distributed but expressed more abundantly in nonpigmented ciliary epithelial cells than in pigmented ones.

The protein resides in the cytoplasm. It localises to the cytosol. Its subcellular location is the nucleus. The protein localises to the cytoskeleton. In terms of biological role, involved in both the assembly of spliceosomal snRNPs and the methylation of Sm proteins. Chaperone that regulates the assembly of spliceosomal U1, U2, U4 and U5 small nuclear ribonucleoproteins (snRNPs), the building blocks of the spliceosome, and thereby plays an important role in the splicing of cellular pre-mRNAs. Most spliceosomal snRNPs contain a common set of Sm proteins SNRPB, SNRPD1, SNRPD2, SNRPD3, SNRPE, SNRPF and SNRPG that assemble in a heptameric protein ring on the Sm site of the small nuclear RNA to form the core snRNP (Sm core). In the cytosol, the Sm proteins SNRPD1, SNRPD2, SNRPE, SNRPF and SNRPG are trapped in an inactive 6S pICln-Sm complex by the chaperone CLNS1A that controls the assembly of the core snRNP. Dissociation by the SMN complex of CLNS1A from the trapped Sm proteins and their transfer to an SMN-Sm complex triggers the assembly of core snRNPs and their transport to the nucleus. The chain is Methylosome subunit pICln (CLNS1A) from Oryctolagus cuniculus (Rabbit).